Consider the following 140-residue polypeptide: Nucleoside diphosphate kinase (140 aa).

Residues Lys11, Phe59, Arg87, Thr93, Arg104, and Asn114 each coordinate ATP. The Pros-phosphohistidine intermediate role is filled by His117.

This sequence belongs to the NDK family. Homotetramer. Mg(2+) is required as a cofactor.

It localises to the cytoplasm. The catalysed reaction is a 2'-deoxyribonucleoside 5'-diphosphate + ATP = a 2'-deoxyribonucleoside 5'-triphosphate + ADP. The enzyme catalyses a ribonucleoside 5'-diphosphate + ATP = a ribonucleoside 5'-triphosphate + ADP. Its function is as follows. Major role in the synthesis of nucleoside triphosphates other than ATP. The ATP gamma phosphate is transferred to the NDP beta phosphate via a ping-pong mechanism, using a phosphorylated active-site intermediate. The sequence is that of Nucleoside diphosphate kinase from Rickettsia typhi (strain ATCC VR-144 / Wilmington).